The following is a 382-amino-acid chain: MSTYTRPVMLLLCGLLLLTLAIAVLNTLVPLWLAQANLPTWQVGMVSSSYFTGNLVGTLFTGYLIKRIGFNRSYYLASLIFAAGCVGLGGMVGFWSWMSWRFIAGIGCAMIWVVVESALMCSGTSHNRGRLLAAYMMAYYMGTFLGQLLVSKVSGELLHVLPWVTGMILAGILPLLFTRIVNQQTQARHSSSISAMLKLRQARLGVNGCIISGIVLGSLYGLMPLYLKHQGMANASIGFWMAVLVSAGILGQWPMGRLADKFGRLLVLRVQVFVVILGSIAMLTQAAMAPALFILGAAGFKLYPVAMAWACEKVEHHQLVAMNQALLLSYTVGSLLGPSFAAMLMQNYSDNLLFIMIASVSFIYLLMLLRNAGQTPNPVAHI.

11 helical membrane-spanning segments follow: residues 8–28 (VMLL…LNTL), 45–65 (MVSS…GYLI), 75–95 (YLAS…VGFW), 102–122 (FIAG…LMCS), 131–151 (LLAA…LLVS), 157–177 (LLHV…PLLF), 204–224 (LGVN…GLMP), 231–251 (GMAN…GILG), 274–294 (VVIL…ALFI), 325–345 (ALLL…AMLM), and 349–369 (SDNL…LMLL).

This sequence belongs to the major facilitator superfamily. YcaD (TC 2.A.1.26) family.

The protein localises to the cell inner membrane. This is an uncharacterized protein from Salmonella gallinarum (strain 287/91 / NCTC 13346).